A 199-amino-acid polypeptide reads, in one-letter code: Glycerol-3-phosphate acyltransferase (199 aa).

5 helical membrane-spanning segments follow: residues 5-25 (VLTI…SAVL), 56-76 (SAAL…YLAF), 83-103 (IALG…IFFG), 118-138 (APIG…LVLV), and 141-161 (YSSF…WWLD).

Belongs to the PlsY family. As to quaternary structure, probably interacts with PlsX.

It is found in the cell inner membrane. It carries out the reaction an acyl phosphate + sn-glycerol 3-phosphate = a 1-acyl-sn-glycero-3-phosphate + phosphate. The protein operates within lipid metabolism; phospholipid metabolism. Catalyzes the transfer of an acyl group from acyl-phosphate (acyl-PO(4)) to glycerol-3-phosphate (G3P) to form lysophosphatidic acid (LPA). This enzyme utilizes acyl-phosphate as fatty acyl donor, but not acyl-CoA or acyl-ACP. The chain is Glycerol-3-phosphate acyltransferase from Shewanella halifaxensis (strain HAW-EB4).